Reading from the N-terminus, the 143-residue chain is Large ribosomal subunit protein uL11 (143 aa).

The protein belongs to the universal ribosomal protein uL11 family. In terms of assembly, part of the ribosomal stalk of the 50S ribosomal subunit. Interacts with L10 and the large rRNA to form the base of the stalk. L10 forms an elongated spine to which L12 dimers bind in a sequential fashion forming a multimeric L10(L12)X complex. Post-translationally, one or more lysine residues are methylated.

Forms part of the ribosomal stalk which helps the ribosome interact with GTP-bound translation factors. In Polynucleobacter asymbioticus (strain DSM 18221 / CIP 109841 / QLW-P1DMWA-1) (Polynucleobacter necessarius subsp. asymbioticus), this protein is Large ribosomal subunit protein uL11.